The chain runs to 495 residues: Ectonucleoside triphosphate diphosphohydrolase 8 (495 aa).

Residues 1-8 are Cytoplasmic-facing; sequence MGLTWKQR. Residues 9–29 traverse the membrane as a helical segment; sequence VFTALLGAAAVSGLTALLLVL. At 30-466 the chain is on the extracellular side; the sequence is VGTMNVLLPP…PAQGWAQSFG (437 aa). The cysteines at positions 78 and 102 are disulfide-linked. Glu-168 (proton acceptor) is an active-site residue. Residues Cys-246 and Cys-292 are joined by a disulfide bond. N-linked (GlcNAc...) asparagine glycans are attached at residues Asn-303 and Asn-324. Disulfide bonds link Cys-328–Cys-334 and Cys-380–Cys-403. A helical membrane pass occupies residues 467–487; it reads VWAAGVVFVVLTLAATLGAVA. Residues 488–495 lie on the Cytoplasmic side of the membrane; that stretch reads VQVFWLQD.

The protein belongs to the GDA1/CD39 NTPase family. The cofactor is Ca(2+). Requires Mg(2+) as cofactor. Post-translationally, N-glycosylated.

It localises to the cell membrane. It carries out the reaction a ribonucleoside 5'-triphosphate + 2 H2O = a ribonucleoside 5'-phosphate + 2 phosphate + 2 H(+). Its function is as follows. Canalicular ectonucleoside NTPDase responsible for the main hepatic NTPDase activity. Ectonucleoside NTPDases catalyze the hydrolysis of gamma- and beta-phosphate residues of nucleotides, playing a central role in concentration of extracellular nucleotides. Has activity toward ATP, ADP, UTP and UDP, but not toward AMP. The sequence is that of Ectonucleoside triphosphate diphosphohydrolase 8 (ENTPD8) from Bos taurus (Bovine).